The sequence spans 57 residues: Potassium channel toxin alpha-KTx 26.3 (57 aa).

The N-terminal stretch at 1–15 is a signal peptide; that stretch reads MSGLSVFILIALVLS. The propeptide occupies 16–24; the sequence is VIIDVLNNS. Cystine bridges form between Cys-30-Cys-48, Cys-34-Cys-53, and Cys-38-Cys-55.

It belongs to the short scorpion toxin superfamily. Potassium channel inhibitor family. Alpha-KTx 26 subfamily. In terms of tissue distribution, expressed by the venom gland.

It localises to the secreted. In terms of biological role, recombinant toxin that reversibly inhibits the potassium current of mKv1.3/KCNA3 channel stably expressed in COS7 cells (IC(50)=150 nM). The polypeptide is Potassium channel toxin alpha-KTx 26.3 (Mesobuthus gibbosus (Mediterranean checkered scorpion)).